We begin with the raw amino-acid sequence, 346 residues long: Probable electron transfer flavoprotein subunit alpha, mitochondrial (346 aa).

Residue 285–313 (LYVAVGISGAIQHLAGMKESKMIVAINKD) participates in FAD binding.

It belongs to the ETF alpha-subunit/FixB family. Heterodimer of an alpha and a beta subunit. Requires FAD as cofactor.

It localises to the mitochondrion matrix. Its function is as follows. The electron transfer flavoprotein serves as a specific electron acceptor for several dehydrogenases, including five acyl-CoA dehydrogenases, glutaryl-CoA and sarcosine dehydrogenase. It transfers the electrons to the main mitochondrial respiratory chain via ETF-ubiquinone oxidoreductase (ETF dehydrogenase). This chain is Probable electron transfer flavoprotein subunit alpha, mitochondrial (ETF1), found in Cryptococcus neoformans var. grubii (Filobasidiella neoformans var. grubii).